The following is a 368-amino-acid chain: Probable dual-specificity RNA methyltransferase RlmN (368 aa).

Glu-109 serves as the catalytic Proton acceptor. A Radical SAM core domain is found at 115-355; it reads YPDRVTMCIS…VTIRDTRGQE (241 aa). Cysteines 122 and 360 form a disulfide. 3 residues coordinate [4Fe-4S] cluster: Cys-129, Cys-133, and Cys-136. S-adenosyl-L-methionine is bound by residues 184–185, Ser-218, 241–243, and Asn-317; these read GE and SLH. Cys-360 (S-methylcysteine intermediate) is an active-site residue.

The protein belongs to the radical SAM superfamily. RlmN family. It depends on [4Fe-4S] cluster as a cofactor.

It localises to the cytoplasm. The catalysed reaction is adenosine(2503) in 23S rRNA + 2 reduced [2Fe-2S]-[ferredoxin] + 2 S-adenosyl-L-methionine = 2-methyladenosine(2503) in 23S rRNA + 5'-deoxyadenosine + L-methionine + 2 oxidized [2Fe-2S]-[ferredoxin] + S-adenosyl-L-homocysteine. It carries out the reaction adenosine(37) in tRNA + 2 reduced [2Fe-2S]-[ferredoxin] + 2 S-adenosyl-L-methionine = 2-methyladenosine(37) in tRNA + 5'-deoxyadenosine + L-methionine + 2 oxidized [2Fe-2S]-[ferredoxin] + S-adenosyl-L-homocysteine. In terms of biological role, specifically methylates position 2 of adenine 2503 in 23S rRNA and position 2 of adenine 37 in tRNAs. This is Probable dual-specificity RNA methyltransferase RlmN from Streptomyces coelicolor (strain ATCC BAA-471 / A3(2) / M145).